Consider the following 1119-residue polypeptide: DNA-directed RNA polymerase subunit beta (1119 aa).

This sequence belongs to the RNA polymerase beta chain family. The RNAP catalytic core consists of 2 alpha, 1 beta, 1 beta' and 1 omega subunit. When a sigma factor is associated with the core the holoenzyme is formed, which can initiate transcription.

It carries out the reaction RNA(n) + a ribonucleoside 5'-triphosphate = RNA(n+1) + diphosphate. Functionally, DNA-dependent RNA polymerase catalyzes the transcription of DNA into RNA using the four ribonucleoside triphosphates as substrates. In Thermus aquaticus, this protein is DNA-directed RNA polymerase subunit beta.